The chain runs to 77 residues: uncharacterized protein (77 aa).

This is an uncharacterized protein from Acidianus hospitalis (AFV-1).